The following is a 290-amino-acid chain: Protein SSO1 (290 aa).

Topologically, residues 1–265 (MSYNNPYQLE…ARKARKNKIR (265 aa)) are cytoplasmic. A t-SNARE coiled-coil homology domain is found at 190-252 (LAEVQARHQE…EQGVGHTDKA (63 aa)). A helical; Anchor for type IV membrane protein transmembrane segment spans residues 266 to 287 (CWLIVFAIIVVVVVVVVVPAVV). The Extracellular segment spans residues 288 to 290 (KTR).

It belongs to the syntaxin family.

The protein localises to the membrane. In terms of biological role, required for vesicle fusion with the plasma membrane. The sequence is that of Protein SSO1 (SSO1) from Saccharomyces cerevisiae (strain ATCC 204508 / S288c) (Baker's yeast).